The chain runs to 571 residues: Potassium-transporting ATPase potassium-binding subunit (571 aa).

Helical transmembrane passes span 5–25 (GWTQITLYGAVVLALVKPLGW), 64–84 (LGYAGALLLFHVFGFLVLYAI), 136–156 (GLTHQNFLSAATGIAVAVALI), 178–198 (ILYVLLPICILYTLFLVWQGI), 254–274 (LSNFVQMVSIFAIGAALTNVF), 285–305 (WAILAAMGALFLAGVAVAYWA), 330–350 (FDIAASALFAVVTTAASCGAV), 357–379 (FTALGGMIPLVNMQLGEVIIGGV), 421–441 (MLGILCLPLMMLGFTALATVL), 488–508 (LAVGMLVGRFFVIIPALAIAG), and 527–547 (GALFVGLLVGVILIIGGLTFF).

The protein belongs to the KdpA family. In terms of assembly, the system is composed of three essential subunits: KdpA, KdpB and KdpC.

It is found in the cell inner membrane. Functionally, part of the high-affinity ATP-driven potassium transport (or Kdp) system, which catalyzes the hydrolysis of ATP coupled with the electrogenic transport of potassium into the cytoplasm. This subunit binds the periplasmic potassium ions and delivers the ions to the membrane domain of KdpB through an intramembrane tunnel. This is Potassium-transporting ATPase potassium-binding subunit from Methylobacterium nodulans (strain LMG 21967 / CNCM I-2342 / ORS 2060).